Here is a 74-residue protein sequence, read N- to C-terminus: Ferredoxin MycCII (74 aa).

The region spanning 1-29 is the 4Fe-4S ferredoxin-type domain; sequence MRIVLDAERCVGAGQCEATAPELFTQGDD. [3Fe-4S] cluster is bound by residues Cys-10, Cys-16, and Cys-54.

Requires [3Fe-4S] cluster as cofactor.

Its pathway is antibiotic biosynthesis; mycinamicin biosynthesis. Functionally, specific electron transport protein capable of effectively supporting cytochrome P450 MycCI activity in the biosynthesis of mycinamicin, a 16-membered macrolide antibiotic. The polypeptide is Ferredoxin MycCII (Micromonospora griseorubida).